A 297-amino-acid chain; its full sequence is ATP synthase gamma chain (297 aa).

It belongs to the ATPase gamma chain family. As to quaternary structure, F-type ATPases have 2 components, CF(1) - the catalytic core - and CF(0) - the membrane proton channel. CF(1) has five subunits: alpha(3), beta(3), gamma(1), delta(1), epsilon(1). CF(0) has three main subunits: a, b and c.

Its subcellular location is the cell membrane. Its function is as follows. Produces ATP from ADP in the presence of a proton gradient across the membrane. The gamma chain is believed to be important in regulating ATPase activity and the flow of protons through the CF(0) complex. The polypeptide is ATP synthase gamma chain (Micrococcus luteus (strain ATCC 4698 / DSM 20030 / JCM 1464 / CCM 169 / CCUG 5858 / IAM 1056 / NBRC 3333 / NCIMB 9278 / NCTC 2665 / VKM Ac-2230) (Micrococcus lysodeikticus)).